A 178-amino-acid polypeptide reads, in one-letter code: N-alpha-acetyltransferase 20 (178 aa).

Residues 2-157 form the N-acetyltransferase domain; sequence TTLRAFTCDD…DAYDMRKALS (156 aa). Positions 159–178 are disordered; that stretch reads DTEKKSIVPLPHPVRPEDIE.

Belongs to the acetyltransferase family. ARD1 subfamily. As to quaternary structure, component of the N-terminal acetyltransferase B (NatB) complex which is composed of naa20 and naa25.

Its subcellular location is the cytoplasm. It is found in the nucleus. It carries out the reaction N-terminal L-methionyl-L-asparaginyl-[protein] + acetyl-CoA = N-terminal N(alpha)-acetyl-L-methionyl-L-asparaginyl-[protein] + CoA + H(+). It catalyses the reaction N-terminal L-methionyl-L-glutaminyl-[protein] + acetyl-CoA = N-terminal N(alpha)-acetyl-L-methionyl-L-glutaminyl-[protein] + CoA + H(+). The catalysed reaction is N-terminal L-methionyl-L-aspartyl-[protein] + acetyl-CoA = N-terminal N(alpha)-acetyl-L-methionyl-L-aspartyl-[protein] + CoA + H(+). The enzyme catalyses N-terminal L-methionyl-L-glutamyl-[protein] + acetyl-CoA = N-terminal N(alpha)-acetyl-L-methionyl-L-glutamyl-[protein] + CoA + H(+). Catalytic subunit of the NatB complex which catalyzes acetylation of the N-terminal methionine residues of peptides beginning with Met-Asp, Met-Glu, Met-Asn and Met-Gln. Proteins with cell cycle functions are overrepresented in the pool of NatB substrates. Required for maintaining the structure and function of actomyosin fibers and for proper cellular migration. The polypeptide is N-alpha-acetyltransferase 20 (naa20) (Xenopus laevis (African clawed frog)).